The chain runs to 546 residues: Immunoglobulin heavy constant epsilon (546 aa).

Residues 1-499 (ASTQSPSVFP…EAPWTWTGLC (499 aa)) are Extracellular-facing. Ig-like domains follow at residues 6–103 (PSVF…KTFS), 112–210 (PTVK…KKCA), 214–318 (PRGV…TKTS), and 324–423 (PEVY…RAVS). 5 disulfides stabilise this stretch: Cys-15–Cys-105, Cys-29–Cys-85, Cys-135–Cys-193, Cys-239–Cys-299, and Cys-345–Cys-405. Residues Asn-21, Asn-49, Asn-99, Asn-146, Asn-252, Asn-264, and Asn-275 are each glycosylated (N-linked (GlcNAc...) asparagine). Residues 500-520 (IFAALFLLSVSYSAAITLLMV) form a helical membrane-spanning segment. Topologically, residues 521 to 546 (QRFLSATRQGRPQTSLDYTNVLQPHA) are cytoplasmic.

In terms of assembly, the basic structural unit of both sIgE and mIgE molecules consists of two identical heavy chains and two identical light chains; disulfide-linked. N-terminal variable regions of the heavy and light chains form the antigen binding sites, whereas the C-terminal constant regions of the heavy chains interact with immune receptors to mediate effector functions. Part of IgE antibody. Interacts (via CH3) with the alpha chain/FCE1RA of IgE Fc receptor complex. Interacts (via CH3 region) with FCER2 (via C-type lectin domain); this interaction regulates IgE homeostasis. As to quaternary structure, part of IgE B cell antigen receptor complex (BCR). The BCR complex consists of one mIgE molecule responsible for antigen binding, non-covalently associated with CD79A and CD79B signaling chains. In terms of tissue distribution, expressed in B lymphocytes stimulated with IL4 and CD40.

The protein resides in the secreted. It is found in the cell membrane. Its function is as follows. Constant region of immunoglobulin heavy chains. Immunoglobulins, also known as antibodies, are membrane-bound or secreted glycoproteins produced by B lymphocytes. In the recognition phase of humoral immunity, the membrane-bound immunoglobulins serve as receptors which, upon binding of a specific antigen, trigger the clonal expansion and differentiation of B lymphocytes into immunoglobulins-secreting plasma cells. Secreted immunoglobulins mediate the effector phase of humoral immunity, which results in the elimination of bound antigens. The antigen binding site is formed by the variable domain of one heavy chain, together with that of its associated light chain. Thus, each immunoglobulin has two antigen binding sites with remarkable affinity for a particular antigen. The variable domains are assembled by a process called V-(D)-J rearrangement and can then be subjected to somatic hypermutations which, after exposure to antigen and selection, allow affinity maturation for a particular antigen. In terms of biological role, constant region of secreted IgE, also known as the Fc region of IgE antibody. Mediates IgE effector functions on myeloid and lymphoid cells primarily via two Fc receptors, the high-affinity IgE Fc receptor complex/FCER1A:MS4A2:FCGR1A and the low-affinity FCER2 receptor, which upon antigen/allergen cross-linking initiate signaling pathways that lead to immune cell activation and differentiation. Triggers the immediate hypersensitivity response to allergens as a host defense mechanism against helminth parasites, pathogenic bacteria and venom toxicity. When dysregulated, it can elicit harmful life-threatening allergic and anaphylactic reactions. Stimulates the high-affinity IgE Fc receptor complex/FCER1A:MS4A2:FCGR1A on mast cells, basophils and eosinophils leading to secretion of vasoactive amines, lipid mediators and cytokines that contribute to inflammatory response, tissue remodeling and cytotoxicity against microbes. On macrophages, cross-linking of FCER2 by IgE immune complexes induces intracellular killing of parasites through activation of L-Arginine-nitric oxide pathway. Activates macrophages to kill tumor cells via antigen-specific antibody-dependent cytotoxicity (ADCC). Triggers differentiation of quiescent M0 macrophages toward M1 state and reprograms M2 macrophages toward a proinflammatory state with antitumor functions. Stimulates FCER2 on B cells and initiates IgE-dependent antigen uptake and presentation to T cells. Constant region of membrane-bound IgE (long mIgE), part of the B cell receptor complex (BCR). Upon antigen cross-linking triggers quick BCR signaling, ensuring survival of IgE-switched B cells and differentiation into plasma cells, thus regulating both primary and memory IgE responses. Functionally, constant region of membrane-bound IgE (short mIgE), part of the B cell receptor complex (BCR). Upon antigen cross-linking initiates slower but sustained BCR signaling that negatively regulates mature B cell proliferation. This chain is Immunoglobulin heavy constant epsilon, found in Homo sapiens (Human).